The primary structure comprises 711 residues: Ent-copalyl diphosphate synthase 1 (711 aa).

Position 145 (K145) interacts with substrate. D277 and D279 together coordinate Mg(2+). The DXDD motif motif lies at 277–280; the sequence is DIDD. K364 provides a ligand contact to substrate.

It belongs to the terpene synthase family. Tpsc subfamily. The cofactor is Mg(2+).

It catalyses the reaction (2E,6E,10E)-geranylgeranyl diphosphate = ent-copalyl diphosphate. It functions in the pathway secondary metabolite biosynthesis; terpenoid biosynthesis. Involved in the biosynthesis of ent-kaurene diterpenoids natural products such as oridonin, miltiradiene, eriocalyxin B and nezukol, known to exhibit antitumor, anti-inflammatory and antibacterial activities. Catalyzes the conversion of (2E,6E,10E)-geranylgeranyl diphosphate (GGPP) to ent-copalyl diphosphate (ent-CPP). The protein is Ent-copalyl diphosphate synthase 1 of Isodon japonicus (Scutellaria japonica).